The chain runs to 738 residues: MCGCVGVISNVDENFQVKTIVTMSDIDYEALEKEVPLDDIDFSDLEEQYAVKPDFGIDNFVVVDGAPIAPEAKVPVLIKVLKKLFSTVGEIVEGEEGIHMPLEDGKSKGFLFIQFKTAQMADAAIQQMHGKKLDQKHRLLVNKLSDIEKYGIEGNVPTEFKEPEIPPFKSHGYLKSWLQDEQGRDQIGLHYSDTFGVYWNKRKSPEPVIEPRKGFTSKYAKFSPKGTYLFSIHPQGIQSWGGAQFESISKFIHSQVRLIDFSPNEKYLVTLSPQPIQVPENPAERASYPFGPESNGHKLVIWDLATSEPARTFALPPHLEGQKEMPWPLVKWSHDDKYCARQGPGALAIYETPSFQLLDKKLVKIDDIVDFEWAPAPVYLDTSSQNGPGEHVLSYWTPESSNQTARVALMQIPSRQVLRTINLFQVSDCKMHWQDEAKYLCVKVDRHTKSGKTIFSNLEFFKVTERDIPVEKLELKEVVINFAWEPRSDRFVTISRLDDGALNPAIPKNTIAFYAPETSKTKGGAITSSKYKAFETVVDKHSNTVYWSPKGRFVVIATLARSNGELEFYDCTYEEENVRTTSKNNVKLLKSEKFSGMTNLAWDPSGRFVAAWSSSWIHTIENGYKMFEFTGNMLRDESIDNFNEFLWRPRPPSMLNAADRKKVRKNLRTYSAQFEEADAMEADAATRQLILTRRKQLEEWRAYRAKHASAGHQKKEDKMTVIEEIKEEIIEEKEEIVE.

Residues 1–120 (MCGCVGVISN…LFIQFKTAQM (120 aa)) form a sufficient for interaction with HCR1 and TIF32 region. The tract at residues 1-245 (MCGCVGVISN…GIQSWGGAQF (245 aa)) is sufficient for interaction with PIC8. Positions 59-146 (NFVVVDGAPI…HRLLVNKLSD (88 aa)) constitute an RRM domain. 4 WD repeats span residues 211-250 (PRKG…SISK), 322-360 (QKEM…LLDK), 363-406 (VKID…QTAR), and 537-579 (VVDK…ENVR).

Belongs to the eIF-3 subunit B family. In terms of assembly, component of the eukaryotic translation initiation factor 3 (eIF-3) complex.

It is found in the cytoplasm. Functionally, RNA-binding component of the eukaryotic translation initiation factor 3 (eIF-3) complex, which is involved in protein synthesis of a specialized repertoire of mRNAs and, together with other initiation factors, stimulates binding of mRNA and methionyl-tRNAi to the 40S ribosome. The eIF-3 complex specifically targets and initiates translation of a subset of mRNAs involved in cell proliferation. The sequence is that of Eukaryotic translation initiation factor 3 subunit B from Meyerozyma guilliermondii (strain ATCC 6260 / CBS 566 / DSM 6381 / JCM 1539 / NBRC 10279 / NRRL Y-324) (Yeast).